A 622-amino-acid polypeptide reads, in one-letter code: Sodium-coupled monocarboxylate transporter 1 (622 aa).

At 1-15 (MVTPGNIGSFTVWDY) the chain is on the extracellular side. The helical transmembrane segment at 16–36 (LVFALMLLISAVIGIYYAFAG) threads the bilayer. Topologically, residues 37–51 (GGQKTSKDFLMGGRS) are cytoplasmic. Residues 52-72 (MTAVPVALSLTASFMSAVTVL) form a helical membrane-spanning segment. Residues 73–83 (GTPAEVYRFGA) lie on the Extracellular side of the membrane. The chain crosses the membrane as a helical span at residues 84–104 (MFIIFAFSYTIVVIISSEVFL). The Cytoplasmic portion of the chain corresponds to 105–128 (PVFYRLGITSTYEYLELRFNKFVR). The chain crosses the membrane as a helical span at residues 129-149 (LLGTILFIIQTVLYTGIVIYA). Residues 150–161 (PALALNQVTGFD) are Extracellular-facing. A helical membrane pass occupies residues 162–182 (LWGAVVATGVVCTFYCTMGGL). Over 183 to 184 (KA) the chain is Cytoplasmic. Residues 185-205 (VVWTDVFQVGIMVAGFTSVII) traverse the membrane as a helical segment. Over 206–241 (RAVVVQGGIGPILNDSYYGDRLNFWDFDPNPLKRHT) the chain is Extracellular. An N-linked (GlcNAc...) asparagine glycan is attached at N219. The helical transmembrane segment at 242–262 (FWTIVVGGTFTWTGIYGVNQA) threads the bilayer. Residues 263–283 (QVQRYIACKTRFQAKMSLYVN) are Cytoplasmic-facing. A helical membrane pass occupies residues 284–304 (LIGLWAILACAVLSGLAMYSI). The Extracellular portion of the chain corresponds to 305–336 (YKDCDPWTAKFVSAPDQLMPYLALDILRDYPG). A helical transmembrane segment spans residues 337 to 357 (LPGLFVSCAYSGTLSTVSSSI). The Cytoplasmic portion of the chain corresponds to 358–389 (NALAAVTVEDLIKPYIRSLSEKKMSWISKGTS). Residues 390–410 (LLYGAICIGMAGIASLMGGLL) traverse the membrane as a helical segment. Residues 411-415 (QAALS) lie on the Extracellular side of the membrane. The chain crosses the membrane as a helical span at residues 416 to 436 (IFGMVGGPLLGLFSLGILFPF). Residues 437–438 (VN) lie on the Cytoplasmic side of the membrane. Residues 439–459 (SLGAVIGLLSGFAISLWVGIG) traverse the membrane as a helical segment. Topologically, residues 460–521 (SQIYAPSPSS…LADSWYSLSY (62 aa)) are extracellular. 2 N-linked (GlcNAc...) asparagine glycosylation sites follow: N481 and N488. The chain crosses the membrane as a helical span at residues 522-542 (LYFSTIGTIVAVLVGVIVSLL). The Cytoplasmic segment spans residues 543–622 (SGGLKQNVNR…KGEKTNGITA (80 aa)). The tract at residues 591–622 (DNDMEQGTDNPAFNNMEMTSTEKGEKTNGITA) is disordered. Polar residues predominate over residues 595–609 (EQGTDNPAFNNMEMT).

Belongs to the sodium:solute symporter (SSF) (TC 2.A.21) family. In the gastrula and neurula stages, expressed in the gastrula anterior endoderm and in the entire circumference of the blastopore lip superficial endoderm. At tailbud stages, abundant expression observed in the ventral midgut region. As development proceeds expression becomes restricted to the liver diverticulum and ultimately to the presumptive gallbladder, by tadpole stage 35. Also present in pronephros and the tip of the tail.

Its subcellular location is the apical cell membrane. The enzyme catalyses (S)-lactate(out) + 2 Na(+)(out) = (S)-lactate(in) + 2 Na(+)(in). The catalysed reaction is propanoate(out) + 2 Na(+)(out) = propanoate(in) + 2 Na(+)(in). It carries out the reaction pyruvate(out) + 2 Na(+)(out) = pyruvate(in) + 2 Na(+)(in). It catalyses the reaction acetate(out) + 2 Na(+)(out) = acetate(in) + 2 Na(+)(in). The enzyme catalyses butanoate(out) + 2 Na(+)(out) = butanoate(in) + 2 Na(+)(in). The catalysed reaction is nicotinate(out) + 2 Na(+)(out) = nicotinate(in) + 2 Na(+)(in). It carries out the reaction (R)-3-hydroxybutanoate(out) + 2 Na(+)(out) = (R)-3-hydroxybutanoate(in) + 2 Na(+)(in). It catalyses the reaction acetoacetate(out) + 2 Na(+)(out) = acetoacetate(in) + 2 Na(+)(in). The enzyme catalyses 4-methyl-2-oxopentanoate(out) + 2 Na(+)(out) = 4-methyl-2-oxopentanoate(in) + 2 Na(+)(in). The catalysed reaction is 5-oxo-L-proline(out) + 2 Na(+)(out) = 5-oxo-L-proline(in) + 2 Na(+)(in). It carries out the reaction iodide(out) = iodide(in). It catalyses the reaction chloride(in) = chloride(out). The enzyme catalyses nitrate(in) = nitrate(out). The catalysed reaction is bromide(in) = bromide(out). In terms of biological role, acts as an electrogenic sodium (Na(+)) and chloride (Cl-)-dependent sodium-coupled solute transporter, including transport of monocarboxylates (short-chain fatty acids including L-lactate, D-lactate, pyruvate, acetate, propionate, valerate and butyrate), mocarboxylate drugs (nicotinate, benzoate, salicylate and 5-aminosalicylate) and ketone bodies (beta-D-hydroxybutyrate, acetoacetate and alpha-ketoisocaproate), with a Na(+):substrate stoichiometry of between 4:1 and 2:1. Catalyzes passive carrier mediated diffusion of iodide. Mediates iodide transport from the thyrocyte into the colloid lumen through the apical membrane. Mediates sodium-coupled electrogenic transport of pyroglutamate (5-oxo-L-proline). Can mediate the transport of chloride, bromide, iodide and nitrate ions when external concentration of sodium ions is reduced. The protein is Sodium-coupled monocarboxylate transporter 1 of Xenopus laevis (African clawed frog).